We begin with the raw amino-acid sequence, 295 residues long: Threonine/homoserine exporter RhtA (295 aa).

Residues 1–9 (MPGSLRKMP) are Cytoplasmic-facing. A helical transmembrane segment spans residues 10–30 (VWLPIVILLVAMASIQGGASL). Positions 30–135 (LAKSLFPLVG…VLAVLGLWFL (106 aa)) constitute an EamA 1 domain. Topologically, residues 31-38 (AKSLFPLV) are periplasmic. A helical transmembrane segment spans residues 39-59 (GAPGVTALRLALGTLILIAFF). At 60–71 (KPWRLRFAKEQR) the chain is on the cytoplasmic side. The helical transmembrane segment at 72 to 92 (LPLLFYGVSLGGMNYLFYLSI) threads the bilayer. Residue Gln-93 is a topological domain, periplasmic. Residues 94-114 (TVPLGIAVALEFTGPLAVALF) form a helical membrane-spanning segment. The Cytoplasmic portion of the chain corresponds to 115–118 (SSRR). The helical transmembrane segment at 119–139 (PVDFVWVVLAVLGLWFLLPLG) threads the bilayer. Topologically, residues 140-146 (QDVSHVD) are periplasmic. A helical membrane pass occupies residues 147–167 (LTGCALALGAGACWAIYILSG). The 120-residue stretch at 159-278 (CWAIYILSGQ…LGAIIAASMG (120 aa)) folds into the EamA 2 domain. At 168–175 (QRAGAEHG) the chain is on the cytoplasmic side. Residues 176-196 (PATVAIGSLIAALIFVPIGAL) traverse the membrane as a helical segment. At 197–200 (QAGE) the chain is on the periplasmic side. Residues 201 to 221 (ALWHWSVIPLGLAVAILSTAL) form a helical membrane-spanning segment. Residues 222-237 (PYSLEMIALTRLPTRT) are Cytoplasmic-facing. The chain crosses the membrane as a helical span at residues 238–258 (FGTLMSMEPALAAVSGMIFLG). Over 259-262 (ETLT) the chain is Periplasmic. A helical membrane pass occupies residues 263-283 (PIQLLALGAIIAASMGSTLTV). The Cytoplasmic segment spans residues 284–295 (RKESKIKELDIN).

The protein belongs to the drug/metabolite transporter (DMT) superfamily. 10 TMS drug/metabolite exporter (DME) (TC 2.A.7.3) family.

The protein localises to the cell inner membrane. In terms of biological role, involved in the efflux of threonine and homoserine. The chain is Threonine/homoserine exporter RhtA (rhtA) from Escherichia coli O157:H7.